A 329-amino-acid chain; its full sequence is 4-hydroxythreonine-4-phosphate dehydrogenase (329 aa).

His-136 and Thr-137 together coordinate substrate. The a divalent metal cation site is built by His-166, His-211, and His-266. 3 residues coordinate substrate: Lys-274, Asn-283, and Arg-292.

It belongs to the PdxA family. Homodimer. Requires Zn(2+) as cofactor. Mg(2+) is required as a cofactor. Co(2+) serves as cofactor.

The protein resides in the cytoplasm. The enzyme catalyses 4-(phosphooxy)-L-threonine + NAD(+) = 3-amino-2-oxopropyl phosphate + CO2 + NADH. The protein operates within cofactor biosynthesis; pyridoxine 5'-phosphate biosynthesis; pyridoxine 5'-phosphate from D-erythrose 4-phosphate: step 4/5. Functionally, catalyzes the NAD(P)-dependent oxidation of 4-(phosphooxy)-L-threonine (HTP) into 2-amino-3-oxo-4-(phosphooxy)butyric acid which spontaneously decarboxylates to form 3-amino-2-oxopropyl phosphate (AHAP). The protein is 4-hydroxythreonine-4-phosphate dehydrogenase of Citrobacter koseri (strain ATCC BAA-895 / CDC 4225-83 / SGSC4696).